The chain runs to 641 residues: Soluble starch synthase 1, chloroplastic/amyloplastic (641 aa).

Residue K145 coordinates ADP-alpha-D-glucose.

The protein belongs to the glycosyltransferase 1 family. Bacterial/plant glycogen synthase subfamily. High expression in leaves and very low in tubers.

The protein resides in the plastid. Its subcellular location is the chloroplast. The protein localises to the amyloplast. The enzyme catalyses [(1-&gt;4)-alpha-D-glucosyl](n) + ADP-alpha-D-glucose = [(1-&gt;4)-alpha-D-glucosyl](n+1) + ADP + H(+). It participates in glycan biosynthesis; starch biosynthesis. Its function is as follows. Plays a minor role in starch synthesis in storage organs (tubers), but may contribute to the deposition of transient starch in chloroplasts of leaves. This is Soluble starch synthase 1, chloroplastic/amyloplastic from Solanum tuberosum (Potato).